We begin with the raw amino-acid sequence, 235 residues long: Probable ribosomal RNA small subunit methyltransferase A (235 aa).

Residues His-9, Leu-11, Gly-34, Glu-55, Asp-78, and Asn-93 each coordinate S-adenosyl-L-methionine.

This sequence belongs to the class I-like SAM-binding methyltransferase superfamily. rRNA adenine N(6)-methyltransferase family. RsmA subfamily.

The protein localises to the cytoplasm. Functionally, specifically dimethylates two adjacent adenosines in the loop of a conserved hairpin near the 3'-end of 16S rRNA in the 30S particle. May play a critical role in biogenesis of 30S subunits. This chain is Probable ribosomal RNA small subunit methyltransferase A, found in Pyrobaculum islandicum (strain DSM 4184 / JCM 9189 / GEO3).